We begin with the raw amino-acid sequence, 689 residues long: uncharacterized protein (689 aa).

Ser566 provides a ligand contact to substrate. Tyr579 acts as the Proton acceptor in catalysis.

The protein belongs to the short-chain dehydrogenases/reductases (SDR) family.

This is an uncharacterized protein from Bacillus subtilis (strain 168).